We begin with the raw amino-acid sequence, 739 residues long: Adhesion G protein-coupled receptor L4 (739 aa).

The N-terminal stretch at 1-19 is a signal peptide; that stretch reads MRLLPLLVGFSTLLNCSYT. In terms of domain architecture, EGF-like 1 spans 20-57; it reads QNCSKTTCLPNAKCEVHNGVEACFCSQGYSGNGVTICE. Over 20-481 the chain is Extracellular; the sequence is QNCSKTTCLP…DYNILTRITQ (462 aa). N21 carries N-linked (GlcNAc...) asparagine glycosylation. 9 disulfide bridges follow: C22–C33, C27–C42, C44–C56, C62–C74, C68–C83, C85–C106, C112–C124, C118–C133, and C135–C156. The EGF-like 2; calcium-binding domain maps to 58–107; the sequence is DIDECSESSVCGDHAVCENVNGGFSCFCREGYQTATGKSQFTPNDGSYCQ. Positions 108–157 constitute an EGF-like 3; calcium-binding domain; the sequence is DIDECSESSVCGDHAVCENVNGGFSCFCREGYQTATGKSQFTPNDGSYCQ. N-linked (GlcNAc...) asparagine glycans are attached at residues N176, N226, N237, N298, N422, N430, and N444. In terms of domain architecture, GAIN-B spans 293–468; that stretch reads SQFDMNSTDL…AILMSSTSSI (176 aa). 2 disulfides stabilise this stretch: C418–C450 and C438–C452. The interval 418 to 468 is GPS; sequence CAFWNYSVDAMNNGSWSTEGCELTHSNDTHTSCRCSHLTHFAILMSSTSSI. The helical transmembrane segment at 482–502 threads the bilayer; that stretch reads LGIIISLICLAICIFTFWFFS. Residues 503–513 lie on the Cytoplasmic side of the membrane; that stretch reads EIQSTRTTIHK. The chain crosses the membrane as a helical span at residues 514 to 534; the sequence is NLCCSLFLAELVFLIGININT. Residues 535 to 548 lie on the Extracellular side of the membrane; the sequence is NKLVCSIIAGLLHY. Residues 549-569 form a helical membrane-spanning segment; it reads FFLAAFAWMCIEGIHLYLIVV. At 570 to 581 the chain is on the cytoplasmic side; that stretch reads GVIYNKGFLHKN. A helical membrane pass occupies residues 582–602; that stretch reads FYIFGYLSPAVVVGFSASLGY. Residues 603–622 are Extracellular-facing; it reads RYYGTTKVCWLSTENNFIWS. Residues 623-643 traverse the membrane as a helical segment; the sequence is FIGPACLIILVNLLAFGVIIY. The Cytoplasmic segment spans residues 644 to 667; it reads KVFRHTAGLKPEVSCYENIRSCAR. The chain crosses the membrane as a helical span at residues 668 to 688; the sequence is GALALLFLLGTTWIFGVLHVV. Over 689–695 the chain is Extracellular; that stretch reads HASVVTA. Residues 696–716 traverse the membrane as a helical segment; that stretch reads YLFTVSNAFQGMFIFLFLCVL. Topologically, residues 717–739 are cytoplasmic; it reads SRKIQEEYYRLFKNVPCCFGCLR.

Belongs to the G-protein coupled receptor 2 family. Adhesion G-protein coupled receptor (ADGR) subfamily. As to quaternary structure, heterodimer of 2 chains generated by proteolytic processing; the large extracellular N-terminal fragment and the membrane-bound C-terminal fragment predominantly remain associated and non-covalently linked. In terms of processing, glycosylated. Post-translationally, proteolytically cleaved into 2 subunits, an extracellular alpha subunit and a seven-transmembrane subunit.

It localises to the cell membrane. Its function is as follows. Endothelial orphan receptor that acts as a key regulator of angiogenesis. This Mus musculus (Mouse) protein is Adhesion G protein-coupled receptor L4 (Adgrl4).